We begin with the raw amino-acid sequence, 512 residues long: Pantothenate transporter FEN2 (512 aa).

The Cytoplasmic segment spans residues M1–R27. The helical transmembrane segment at L28–N48 threads the bilayer. The Extracellular portion of the chain corresponds to Y49 to T79. Residues V80–P100 form a helical membrane-spanning segment. At P101 to R102 the chain is on the cytoplasmic side. The chain crosses the membrane as a helical span at residues I103–T123. The Extracellular segment spans residues S124–R132. A helical transmembrane segment spans residues F133–W153. Over Y154–A164 the chain is Cytoplasmic. The helical transmembrane segment at I165–F185 threads the bilayer. The Extracellular segment spans residues T186–R198. The chain crosses the membrane as a helical span at residues W199 to F219. At P220–R271 the chain is on the cytoplasmic side. The helical transmembrane segment at W272–S292 threads the bilayer. Topologically, residues N293 to N312 are extracellular. The helical transmembrane segment at Y313–S333 threads the bilayer. Residues K334–H342 are Cytoplasmic-facing. Residues V343–L363 form a helical membrane-spanning segment. Topologically, residues N364–Q372 are extracellular. Residues Y373–C393 form a helical membrane-spanning segment. Topologically, residues H394 to A401 are cytoplasmic. The helical transmembrane segment at I402 to F422 threads the bilayer. Residues F423 to G434 lie on the Extracellular side of the membrane. The helical transmembrane segment at C435–L455 threads the bilayer. Residues Q456 to R512 lie on the Cytoplasmic side of the membrane. A disordered region spans residues Y468 to R512. The segment covering P475–E496 has biased composition (acidic residues).

It belongs to the major facilitator superfamily. Allantoate permease family.

The protein resides in the cell membrane. Functionally, transports pantothenate into the cell. Also involved in the catabolite repression-mediated regulation of ergosterol biosynthesis and in fenpropimorph resistance. In Saccharomyces cerevisiae (strain ATCC 204508 / S288c) (Baker's yeast), this protein is Pantothenate transporter FEN2 (FEN2).